Here is a 558-residue protein sequence, read N- to C-terminus: Membrane protein insertase YidC (558 aa).

A run of 6 helical transmembrane segments spans residues 6 to 26 (VIAA…FFQP), 326 to 348 (LAID…DYFF), 355 to 377 (GLAI…NFSF), 424 to 444 (LPIL…FVTI), 469 to 489 (VFGL…WPII), and 512 to 532 (IFMF…AGLV).

This sequence belongs to the OXA1/ALB3/YidC family. Type 1 subfamily. As to quaternary structure, interacts with the Sec translocase complex via SecD. Specifically interacts with transmembrane segments of nascent integral membrane proteins during membrane integration.

Its subcellular location is the cell inner membrane. Required for the insertion and/or proper folding and/or complex formation of integral membrane proteins into the membrane. Involved in integration of membrane proteins that insert both dependently and independently of the Sec translocase complex, as well as at least some lipoproteins. Aids folding of multispanning membrane proteins. The protein is Membrane protein insertase YidC of Pelagibacter ubique (strain HTCC1062).